A 341-amino-acid chain; its full sequence is Diguanylate cyclase DgcP (341 aa).

Positions 18–154 (SLESLVRQLL…LFAGLIAQYI (137 aa)) constitute a GAF domain. One can recognise a GGDEF domain in the interval 204–337 (HKIMIAFIDL…KQKTPFVAHP (134 aa)). D212 contacts Mg(2+). Positions 220, 225, and 229 each coordinate substrate. Mg(2+) is bound at residue D255. Residue D255 is the Proton acceptor of the active site.

In terms of assembly, homodimer. Mg(2+) is required as a cofactor.

It catalyses the reaction 2 GTP = 3',3'-c-di-GMP + 2 diphosphate. It functions in the pathway purine metabolism; 3',5'-cyclic di-GMP biosynthesis. In terms of biological role, catalyzes the synthesis of cyclic-di-GMP (c-di-GMP) via the condensation of 2 GTP molecules. Cyclic-di-GMP is a second messenger which controls cell surface-associated traits in bacteria. This Escherichia coli (strain K12) protein is Diguanylate cyclase DgcP.